A 328-amino-acid polypeptide reads, in one-letter code: MSSTSQVALLPKLSLPDGVTVWDGTALEYERRCNNIDEHAVHLMQTINILGIRSKEAQCLNTVLTSVARLRENRQARVYLLCQDGYGVGILKMGVKKLFVTHPSYSSLVEIDPLCVLDFFVDTSFQRKGFGKTLFDAMLLNEGLNPGEVAIDRPSVKFLAFLRKYYGLVEYTPQSNNFVVFHRYFDKWQPQRGKGHRGGNAVPTRSIVRPQNCLRVYPEYQSTTGPNDNFEEDATHRTPPPPLPPPLVPQGSVNSPGPGKKTAYELQYEEYLREQAYRRRQGGDPRLQPVPNPVSSSEIAAASCGARRRMSPTRSGVQYNIISGTPEH.

The N-acetyltransferase domain occupies 5 to 185 (SQVALLPKLS…NNFVVFHRYF (181 aa)). Acetyl-CoA contacts are provided by residues 119 to 132 (FFVD…GFGK) and 155 to 164 (SVKFLAFLRK). 2 disordered regions span residues 219–261 (EYQS…PGKK) and 282–328 (GGDP…TPEH). The span at 238-248 (TPPPPLPPPLV) shows a compositional bias: pro residues. Positions 312 to 328 (PTRSGVQYNIISGTPEH) are enriched in polar residues.

This sequence belongs to the acetyltransferase ATAT1 family.

It carries out the reaction L-lysyl-[alpha-tubulin] + acetyl-CoA = N(6)-acetyl-L-lysyl-[alpha-tubulin] + CoA + H(+). Its function is as follows. Specifically acetylates 'Lys-40' in alpha-tubulin on the lumenal side of microtubules. Promotes microtubule destabilization and accelerates microtubule dynamics; this activity may be independent of acetylation activity. Acetylates alpha-tubulin with a slow enzymatic rate, due to a catalytic site that is not optimized for acetyl transfer. Enters the microtubule through each end and diffuses quickly throughout the lumen of microtubules. Acetylates only long/old microtubules because of its slow acetylation rate since it does not have time to act on dynamically unstable microtubules before the enzyme is released. This Trypanosoma cruzi (strain CL Brener) protein is Alpha-tubulin N-acetyltransferase 2.